The sequence spans 321 residues: Phospho-N-acetylmuramoyl-pentapeptide-transferase (321 aa).

The next 10 membrane-spanning stretches (helical) occupy residues 1-21, 50-70, 76-96, 112-132, 140-160, 176-196, 200-220, 225-245, 250-270, and 300-320; these read MIFI…PILI, MGGL…IIFV, IILL…DDYI, FLAQ…FHLV, IPFV…IVFW, GLAT…SYML, AIGI…PYNL, VFMG…ISIM, LSLI…MLQV, and VVTV…WIGV.

It belongs to the glycosyltransferase 4 family. MraY subfamily. The cofactor is Mg(2+).

It localises to the cell membrane. The enzyme catalyses UDP-N-acetyl-alpha-D-muramoyl-L-alanyl-gamma-D-glutamyl-L-lysyl-D-alanyl-D-alanine + di-trans,octa-cis-undecaprenyl phosphate = Mur2Ac(oyl-L-Ala-gamma-D-Glu-L-Lys-D-Ala-D-Ala)-di-trans,octa-cis-undecaprenyl diphosphate + UMP. It participates in cell wall biogenesis; peptidoglycan biosynthesis. In terms of biological role, catalyzes the initial step of the lipid cycle reactions in the biosynthesis of the cell wall peptidoglycan: transfers peptidoglycan precursor phospho-MurNAc-pentapeptide from UDP-MurNAc-pentapeptide onto the lipid carrier undecaprenyl phosphate, yielding undecaprenyl-pyrophosphoryl-MurNAc-pentapeptide, known as lipid I. This is Phospho-N-acetylmuramoyl-pentapeptide-transferase from Staphylococcus epidermidis (strain ATCC 35984 / DSM 28319 / BCRC 17069 / CCUG 31568 / BM 3577 / RP62A).